Here is a 121-residue protein sequence, read N- to C-terminus: UPF0102 protein BF0706 (121 aa).

It belongs to the UPF0102 family.

In Bacteroides fragilis (strain YCH46), this protein is UPF0102 protein BF0706.